We begin with the raw amino-acid sequence, 555 residues long: Sulfite reductase [ferredoxin] 1 (555 aa).

The 3'-(S-cysteinyl)-tyrosine (Tyr-Cys) cross-link spans 69 to 161 (YTQREQGYDG…SVGLQTTEAC (93 aa)). 4 residues coordinate [4Fe-4S] cluster: Cys417, Cys423, Cys463, and Cys467. Cys467 is a binding site for siroheme.

The protein belongs to the nitrite and sulfite reductase 4Fe-4S domain family. As to quaternary structure, monomer. The cofactor is siroheme. [4Fe-4S] cluster is required as a cofactor.

It carries out the reaction hydrogen sulfide + 6 oxidized [2Fe-2S]-[ferredoxin] + 3 H2O = sulfite + 6 reduced [2Fe-2S]-[ferredoxin] + 7 H(+). Functionally, catalyzes the reduction of sulfite to sulfide, a step in the biosynthesis of sulfur-containing amino acids and cofactors. This Mycolicibacterium paratuberculosis (strain ATCC BAA-968 / K-10) (Mycobacterium paratuberculosis) protein is Sulfite reductase [ferredoxin] 1 (sir1).